We begin with the raw amino-acid sequence, 201 residues long: Glycerol-3-phosphate acyltransferase (201 aa).

The next 6 membrane-spanning stretches (helical) occupy residues 10-30 (MLIG…GLIL), 60-80 (LAAA…LIAA), 86-106 (AAIA…WIGF), 116-136 (LGVL…AWIV), 139-159 (LLTR…PIAL), and 166-186 (ALAA…RANI).

This sequence belongs to the PlsY family. In terms of assembly, probably interacts with PlsX.

The protein localises to the cell inner membrane. The catalysed reaction is an acyl phosphate + sn-glycerol 3-phosphate = a 1-acyl-sn-glycero-3-phosphate + phosphate. It functions in the pathway lipid metabolism; phospholipid metabolism. Catalyzes the transfer of an acyl group from acyl-phosphate (acyl-PO(4)) to glycerol-3-phosphate (G3P) to form lysophosphatidic acid (LPA). This enzyme utilizes acyl-phosphate as fatty acyl donor, but not acyl-CoA or acyl-ACP. This is Glycerol-3-phosphate acyltransferase from Brucella suis (strain ATCC 23445 / NCTC 10510).